The chain runs to 273 residues: Energy-coupling factor transporter ATP-binding protein EcfA (273 aa).

Residues 2–237 (ISIRDLTYFY…RASLLALGLA (236 aa)) enclose the ABC transporter domain. 36 to 43 (GRNGSGKS) is a binding site for ATP.

The protein belongs to the ABC transporter superfamily. Energy-coupling factor EcfA family. Forms a stable energy-coupling factor (ECF) transporter complex composed of 2 membrane-embedded substrate-binding proteins (S component), 2 ATP-binding proteins (A component) and 2 transmembrane proteins (T component).

It localises to the cell membrane. ATP-binding (A) component of a common energy-coupling factor (ECF) ABC-transporter complex. Unlike classic ABC transporters this ECF transporter provides the energy necessary to transport a number of different substrates. This chain is Energy-coupling factor transporter ATP-binding protein EcfA, found in Syntrophomonas wolfei subsp. wolfei (strain DSM 2245B / Goettingen).